The chain runs to 478 residues: NADH-quinone oxidoreductase subunit N 1 (478 aa).

14 helical membrane passes run 6–26 (TVLP…SGVF), 33–53 (FAIT…LVAA), 71–91 (FADV…VTFN), 99–119 (FEFP…VSAS), 121–141 (LITL…LAAF), 156–176 (FVLG…VYGF), 193–212 (PTAA…GLAF), 244–264 (IAVF…VLGQ), 265–285 (WRDL…IGAI), 299–319 (IGHM…GVSG), 321–341 (LIYL…IIAM), 364–384 (FAFV…LAGF), 388–408 (FYVF…LGII), and 438–458 (AGVS…VFHP).

Belongs to the complex I subunit 2 family. In terms of assembly, NDH-1 is composed of 14 different subunits. Subunits NuoA, H, J, K, L, M, N constitute the membrane sector of the complex.

The protein localises to the cell inner membrane. It catalyses the reaction a quinone + NADH + 5 H(+)(in) = a quinol + NAD(+) + 4 H(+)(out). Functionally, NDH-1 shuttles electrons from NADH, via FMN and iron-sulfur (Fe-S) centers, to quinones in the respiratory chain. The immediate electron acceptor for the enzyme in this species is believed to be ubiquinone. Couples the redox reaction to proton translocation (for every two electrons transferred, four hydrogen ions are translocated across the cytoplasmic membrane), and thus conserves the redox energy in a proton gradient. This chain is NADH-quinone oxidoreductase subunit N 1, found in Acidiphilium cryptum (strain JF-5).